Consider the following 192-residue polypeptide: Probable thymidylate kinase (192 aa).

8–15 (GIDGSGKS) is an ATP binding site.

This sequence belongs to the thymidylate kinase family.

The enzyme catalyses dTMP + ATP = dTDP + ADP. The sequence is that of Probable thymidylate kinase from Pyrobaculum aerophilum (strain ATCC 51768 / DSM 7523 / JCM 9630 / CIP 104966 / NBRC 100827 / IM2).